A 118-amino-acid polypeptide reads, in one-letter code: MKFQPLGERVLVERLEEENKTSSGIIIPDNAKEKPLMGVVKVVSHKISEGCKCVKEGDVIAFGKYKGAEIVLDGVEYMVLELEDILGIVSSGSCCHTNSHDHKHAKEHEACCHDHKKH.

It belongs to the GroES chaperonin family. As to quaternary structure, heptamer of 7 subunits arranged in a ring. Interacts with the chaperonin GroEL.

It localises to the cytoplasm. Functionally, together with the chaperonin GroEL, plays an essential role in assisting protein folding. The GroEL-GroES system forms a nano-cage that allows encapsulation of the non-native substrate proteins and provides a physical environment optimized to promote and accelerate protein folding. GroES binds to the apical surface of the GroEL ring, thereby capping the opening of the GroEL channel. The sequence is that of Co-chaperonin GroES from Helicobacter pylori (strain Shi470).